The chain runs to 442 residues: tRNA modification GTPase MnmE (442 aa).

3 residues coordinate (6S)-5-formyl-5,6,7,8-tetrahydrofolate: arginine 22, glutamate 79, and lysine 118. The region spanning 215 to 365 (EIPIAIVGRP…LEKAILFEYQ (151 aa)) is the TrmE-type G domain. Asparagine 225 contacts K(+). GTP-binding positions include 225–230 (NVGKSS), 244–250 (TNIEGTT), and 269–272 (DTAG). Serine 229 is a binding site for Mg(2+). 3 residues coordinate K(+): threonine 244, isoleucine 246, and threonine 249. Threonine 250 is a Mg(2+) binding site. Lysine 442 lines the (6S)-5-formyl-5,6,7,8-tetrahydrofolate pocket.

It belongs to the TRAFAC class TrmE-Era-EngA-EngB-Septin-like GTPase superfamily. TrmE GTPase family. Homodimer. Heterotetramer of two MnmE and two MnmG subunits. Requires K(+) as cofactor.

It is found in the cytoplasm. Functionally, exhibits a very high intrinsic GTPase hydrolysis rate. Involved in the addition of a carboxymethylaminomethyl (cmnm) group at the wobble position (U34) of certain tRNAs, forming tRNA-cmnm(5)s(2)U34. The protein is tRNA modification GTPase MnmE of Mycoplasmopsis pulmonis (strain UAB CTIP) (Mycoplasma pulmonis).